The following is a 413-amino-acid chain: Putative competence-damage inducible protein (413 aa).

The protein belongs to the CinA family.

This chain is Putative competence-damage inducible protein, found in Pediococcus pentosaceus (strain ATCC 25745 / CCUG 21536 / LMG 10740 / 183-1w).